The following is a 309-amino-acid chain: tRNA dimethylallyltransferase (309 aa).

13–20 (GPTAVGKS) is a binding site for ATP. 15-20 (TAVGKS) provides a ligand contact to substrate.

This sequence belongs to the IPP transferase family. As to quaternary structure, monomer. The cofactor is Mg(2+).

It carries out the reaction adenosine(37) in tRNA + dimethylallyl diphosphate = N(6)-dimethylallyladenosine(37) in tRNA + diphosphate. Its function is as follows. Catalyzes the transfer of a dimethylallyl group onto the adenine at position 37 in tRNAs that read codons beginning with uridine, leading to the formation of N6-(dimethylallyl)adenosine (i(6)A). This is tRNA dimethylallyltransferase from Lacticaseibacillus paracasei (strain ATCC 334 / BCRC 17002 / CCUG 31169 / CIP 107868 / KCTC 3260 / NRRL B-441) (Lactobacillus paracasei).